The chain runs to 614 residues: METREGSLTWSVLKCDLHPWIKEAIKSLGYPTMTPVQASTIPLFSGNKDVVVEAVTGSGKTLAFVIPVLQKLSNRLYNIDEEGENPEPVKKGHMLSIILSPTRELAKQIQTVFDKVLEYIPEDKATIKTQLLVGSLSSVREDIDYFLTNKTHILIATPGRLLDFLSSNYVKTNSVEIAVLDEADKLLDISFERDVIKILKQLPKQRRTGLFSATISSAGDTIFRTGMANPVKIVVKSKNSKNAAPTSLNVSYMHVEPETKISALIALIKDYRFQKCIVYFPTCTSVKHFYSVFQTLVNVEEEDRYKFFSLHGQLSTKPRLKTLQNFSEGDSMLHKHVLLTTDVAARGIDIPDVDLVIQLDPPTDPDVFFHRSGRTGRANKVGQAIVMLNNNSREEDYVNFMEVKGMTMSNMECPNISKIHDKFQKKFRKYMLEDRARHELAIKSYVGFVRYYSKHMASSIFRLQTLDYVGLGKMYGLLRLPKMPESRYIPNEEMPEDGWLGDVIDMDKYEYADKQKEESRKKNLEEDKARKVHDAKKRKELKVKNEAWSSKTDKIETKQERREKMKRKREAIEKQLMDDSSSDEETKVDWKEMVKTNKKKKTPSDSMQGSFDDL.

A Q motif motif is present at residues 10 to 38 (WSVLKCDLHPWIKEAIKSLGYPTMTPVQA). Residues 41 to 233 (IPLFSGNKDV…RTGMANPVKI (193 aa)) enclose the Helicase ATP-binding domain. Residue 54–61 (AVTGSGKT) participates in ATP binding. The short motif at 181 to 184 (DEAD) is the DEAD box element. Residues 260-431 (KISALIALIK…KFQKKFRKYM (172 aa)) form the Helicase C-terminal domain. The stretch at 510–581 (EYADKQKEES…IEKQLMDDSS (72 aa)) forms a coiled coil. A compositionally biased stretch (basic and acidic residues) spans 514–529 (KQKEESRKKNLEEDKA). The interval 514-614 (KQKEESRKKN…DSMQGSFDDL (101 aa)) is disordered. The segment covering 530–541 (RKVHDAKKRKEL) has biased composition (basic residues). Basic and acidic residues-rich tracts occupy residues 551-563 (KTDK…ERRE) and 584-595 (EETKVDWKEMVK). A compositionally biased stretch (polar residues) spans 604–614 (SDSMQGSFDDL).

The protein belongs to the DEAD box helicase family. DDX55/SPB4 subfamily. Component of pre-60S ribosomal complexes.

The protein localises to the nucleus. It is found in the nucleolus. The catalysed reaction is ATP + H2O = ADP + phosphate + H(+). Functionally, ATP-binding RNA helicase involved in the biogenesis of 60S ribosomal subunits. Binds 90S pre-ribosomal particles and dissociates from pre-60S ribosomal particles after processing of 27SB pre-rRNA. Required for the normal formation of 18S rRNA through the processing of pre-rRNAs at sites A0, A1 and A2, and the normal formation of 25S and 5.8S rRNAs through the processing of pre-rRNAs at sites C1 and C2. The polypeptide is ATP-dependent rRNA helicase SPB4 (Debaryomyces hansenii (strain ATCC 36239 / CBS 767 / BCRC 21394 / JCM 1990 / NBRC 0083 / IGC 2968) (Yeast)).